Here is a 902-residue protein sequence, read N- to C-terminus: 4-hydroxyphenylacetate decarboxylase glycyl radical subunit (902 aa).

Residues 38–774 (KRAEDLLDVY…ATLATPDGRL (737 aa)) form the PFL domain. Positions 348 and 507 each coordinate 4-hydroxyphenylacetate. Residue Cys-507 is the Cysteine radical intermediate of the active site. Residue Glu-509 is the Proton donor of the active site. 4-hydroxyphenylacetate contacts are provided by His-540 and Glu-641. Positions 782-902 (GSVSAYAGTD…VIARTEYEGV (121 aa)) constitute a Glycine radical domain. Gly-877 is modified (glycine radical).

This sequence belongs to the glycyl radical enzyme (GRE) family. HPAD subfamily. Heterooctamer consisting of 4 large (HpdB) subunits and 4 small (HpdC) subunits. Also forms a catalytically inactive homodimer. In terms of processing, phosphorylated on serine. Phosphorylation may trigger the formation of the active heterooctamers and thereby regulates enzyme activity. Requires the activating protein HpdA to generate the key active site glycyl radical that is involved in catalysis.

The enzyme catalyses 4-hydroxyphenylacetate + H(+) = 4-methylphenol + CO2. It carries out the reaction 3,4-dihydroxyphenylacetate + H(+) = 4-methylcatechol + CO2. The catalysed reaction is 2-hydroxy-2-(4-hydroxyphenyl)acetate + H(+) = 4-hydroxybenzyl alcohol + CO2. Its activity is regulated as follows. Enzyme activity catalyzed by the HPA decarboxylase complex is rapidly and irreversibly inactivated by oxygen. Competitively inhibited by p-hydroxyphenylacetamide. Not inhibited by m- or o-hydroxyphenyl-acetate, p-hydroxybenzoate or p-hydroxyphenylpropionate. Its function is as follows. Glycyl radical subunit of the HPA decarboxylase that decarboxylates phenylacetates with a hydroxyl group in the p-position. Active toward 4-hydroxyphenylacetate, 3,4-dihydroxyphenylacetate and to a lesser extent p-hydroxymandelate (2-hydroxy-2-(4-hydroxyphenyl)acetate), forming 4-methylphenol, 4-methylcatechol and 4-hydroxybenzylalcohol, respectively. Is likely involved in the catabolism of aromatic amino acids such as tyrosine fermentation. 4-methylphenol (p-cresol) formation provides metabolic toxicity, which may benefit the pathogen C.difficile by suppression of the endogenous gastrointestinal microflora, allowing the development of gastrointestinal infections. The large subunit is the catalytic subunit that binds the substrate. The protein is 4-hydroxyphenylacetate decarboxylase glycyl radical subunit of Clostridioides difficile (Peptoclostridium difficile).